A 298-amino-acid polypeptide reads, in one-letter code: ATP phosphoribosyltransferase (298 aa).

It belongs to the ATP phosphoribosyltransferase family. Long subfamily. Requires Mg(2+) as cofactor.

The protein localises to the cytoplasm. The enzyme catalyses 1-(5-phospho-beta-D-ribosyl)-ATP + diphosphate = 5-phospho-alpha-D-ribose 1-diphosphate + ATP. It functions in the pathway amino-acid biosynthesis; L-histidine biosynthesis; L-histidine from 5-phospho-alpha-D-ribose 1-diphosphate: step 1/9. With respect to regulation, feedback inhibited by histidine. Its function is as follows. Catalyzes the condensation of ATP and 5-phosphoribose 1-diphosphate to form N'-(5'-phosphoribosyl)-ATP (PR-ATP). Has a crucial role in the pathway because the rate of histidine biosynthesis seems to be controlled primarily by regulation of HisG enzymatic activity. This is ATP phosphoribosyltransferase from Aliivibrio fischeri (strain ATCC 700601 / ES114) (Vibrio fischeri).